The chain runs to 299 residues: Acetylglutamate kinase (299 aa).

Residues 70-71, arginine 92, and asparagine 186 contribute to the substrate site; that span reads GG.

The protein belongs to the acetylglutamate kinase family. ArgB subfamily.

It localises to the cytoplasm. The enzyme catalyses N-acetyl-L-glutamate + ATP = N-acetyl-L-glutamyl 5-phosphate + ADP. It functions in the pathway amino-acid biosynthesis; L-arginine biosynthesis; N(2)-acetyl-L-ornithine from L-glutamate: step 2/4. Its function is as follows. Catalyzes the ATP-dependent phosphorylation of N-acetyl-L-glutamate. The polypeptide is Acetylglutamate kinase (Petrotoga mobilis (strain DSM 10674 / SJ95)).